The chain runs to 205 residues: Glutathione peroxidase 1 (205 aa).

Ser37 carries the phosphoserine modification. Residue Sec52 is part of the active site. Position 52 (Sec52) is a non-standard amino acid, selenocysteine. Lys91 and Lys117 each carry N6-acetyllysine; alternate. 2 positions are modified to N6-succinyllysine; alternate: Lys91 and Lys117. A glycan (N-linked (Glc) (glycation) lysine; in vitro) is linked at Lys117. Residue Lys124 is modified to N6-acetyllysine. At Lys151 the chain carries N6-acetyllysine; alternate. N6-succinyllysine; alternate is present on Lys151. 2 positions are modified to phosphoserine: Ser200 and Ser204.

The protein belongs to the glutathione peroxidase family. As to quaternary structure, homotetramer. Interacts with MIEN1. During periods of oxidative stress, Sec-52 may react with a superoxide radical, irreversibly lose hydroselenide and be converted to dehydroalanine.

It localises to the cytoplasm. It is found in the mitochondrion. The enzyme catalyses 2 glutathione + H2O2 = glutathione disulfide + 2 H2O. The catalysed reaction is a hydroperoxy polyunsaturated fatty acid + 2 glutathione = a hydroxy polyunsaturated fatty acid + glutathione disulfide + H2O. It catalyses the reaction tert-butyl hydroperoxide + 2 glutathione = tert-butanol + glutathione disulfide + H2O. It carries out the reaction cumene hydroperoxide + 2 glutathione = 2-phenylpropan-2-ol + glutathione disulfide + H2O. The enzyme catalyses (13S)-hydroperoxy-(9Z,11E)-octadecadienoate + 2 glutathione = (13S)-hydroxy-(9Z,11E)-octadecadienoate + glutathione disulfide + H2O. The catalysed reaction is (9S)-hydroperoxy-(10E,12Z)-octadecadienoate + 2 glutathione = (9S)-hydroxy-(10E,12Z)-octadecadienoate + glutathione disulfide + H2O. It catalyses the reaction (5S)-hydroperoxy-(6E,8Z,11Z,14Z)-eicosatetraenoate + 2 glutathione = (5S)-hydroxy-(6E,8Z,11Z,14Z)-eicosatetraenoate + glutathione disulfide + H2O. It carries out the reaction (12S)-hydroperoxy-(5Z,8Z,10E,14Z)-eicosatetraenoate + 2 glutathione = (12S)-hydroxy-(5Z,8Z,10E,14Z)-eicosatetraenoate + glutathione disulfide + H2O. The enzyme catalyses (12R)-hydroperoxy-(5Z,8Z,10E,14Z)-eicosatetraenoate + 2 glutathione = (12R)-hydroxy-(5Z,8Z,10E,14Z)-eicosatetraenoate + glutathione disulfide + H2O. The catalysed reaction is (15S)-hydroperoxy-(5Z,8Z,11Z,13E)-eicosatetraenoate + 2 glutathione = (15S)-hydroxy-(5Z,8Z,11Z,13E)-eicosatetraenoate + glutathione disulfide + H2O. It catalyses the reaction (5S)-hydroperoxy-(6E,8Z,11Z,14Z,17Z)-eicosapentaenoate + 2 glutathione = (5S)-hydroxy-(6E,8Z,11Z,14Z,17Z)-eicosapentaenoate + glutathione disulfide + H2O. It carries out the reaction (15S)-hydroperoxy-(5Z,8Z,11Z,13E,17Z)-eicosapentaenoate + 2 glutathione = (15S)-hydroxy-(5Z,8Z,11Z,13E,17Z)-eicosapentaenoate + glutathione disulfide + H2O. The enzyme catalyses (15S)-hydroperoxy-(11Z,13E)-eicosadienoate + 2 glutathione = (15S)-hydroxy-(11Z,13E)-eicosadienoate + glutathione disulfide + H2O. The catalysed reaction is (17S)-hydroperoxy-(4Z,7Z,10Z,13Z,15E,19Z)-docosahexaenoate + 2 glutathione = (17S)-hydroxy-(4Z,7Z,10Z,13Z,15E,19Z)-docosahexaenoate + glutathione disulfide + H2O. Its function is as follows. Catalyzes the reduction of hydroperoxides in a glutathione-dependent manner thus regulating cellular redox homeostasis. Can reduce small soluble hydroperoxides such as H2O2, cumene hydroperoxide and tert-butyl hydroperoxide, as well as several fatty acid-derived hydroperoxides. In platelets catalyzes the reduction of 12-hydroperoxyeicosatetraenoic acid, the primary product of the arachidonate 12-lipoxygenase pathway. This is Glutathione peroxidase 1 (GPX1) from Bos taurus (Bovine).